Consider the following 686-residue polypeptide: Protein SDA1 homolog (686 aa).

Residues S232, S234, and S236 each carry the phosphoserine modification. Residues 254–315 are a coiled coil; sequence KKGSKNKKKL…SCKERFEVKM (62 aa). Residues 484-508 are disordered; sequence LEKEENTENDEDGWESASLSEEEED. Residues 490 to 508 are compositionally biased toward acidic residues; it reads TENDEDGWESASLSEEEED. Residue T551 is modified to Phosphothreonine. The interval 563–586 is disordered; that stretch reads MKKEMDAAPGKAQKRKYLDMDSDE. Phosphoserine occurs at positions 584, 588, and 594. Residues 604–649 form a disordered region; it reads KPKSDKETRLATAMAGRTDRKEFVRKKTKINPFSSSTNKEKKKQKN.

The protein belongs to the SDA1 family.

Its subcellular location is the nucleus. The protein resides in the nucleolus. Required for 60S pre-ribosomal subunits export to the cytoplasm. The protein is Protein SDA1 homolog (Sdad1) of Rattus norvegicus (Rat).